Here is a 356-residue protein sequence, read N- to C-terminus: Glucose-1-phosphate thymidylyltransferase (356 aa).

Mg(2+) is bound by residues D107 and D221.

It belongs to the glucose-1-phosphate thymidylyltransferase family. Mg(2+) is required as a cofactor.

The catalysed reaction is dTTP + alpha-D-glucose 1-phosphate + H(+) = dTDP-alpha-D-glucose + diphosphate. The protein operates within antibiotic biosynthesis. Functionally, involved in the biosynthesis of the two 2,6-deoxysugars, dTDP-L-oleandrose and dTDP-D-desosamine, attached to the macrolactone ring oleandolide to produce the aglycone antibiotic oleandomycin. Catalyzes the formation of dTDP-glucose from deoxythymidine triphosphate (dTTP) and glucose 1-phosphate. In Streptomyces antibioticus, this protein is Glucose-1-phosphate thymidylyltransferase.